Reading from the N-terminus, the 392-residue chain is L-lactate dehydrogenase (392 aa).

Residues Met1–Ala380 enclose the FMN hydroxy acid dehydrogenase domain. Tyr24 lines the substrate pocket. Ser106 and Gln127 together coordinate FMN. Tyr129 serves as a coordination point for substrate. Thr155 contacts FMN. Arg164 provides a ligand contact to substrate. Lys251 provides a ligand contact to FMN. The Proton acceptor role is filled by His275. Residue Arg278 coordinates substrate. FMN is bound at residue Asp306 to Arg330.

Belongs to the FMN-dependent alpha-hydroxy acid dehydrogenase family. It depends on FMN as a cofactor.

It is found in the cell inner membrane. It carries out the reaction (S)-lactate + A = pyruvate + AH2. Functionally, catalyzes the conversion of L-lactate to pyruvate. Is coupled to the respiratory chain. The polypeptide is L-lactate dehydrogenase (Chromohalobacter salexigens (strain ATCC BAA-138 / DSM 3043 / CIP 106854 / NCIMB 13768 / 1H11)).